Here is a 59-residue protein sequence, read N- to C-terminus: Putative zinc finger protein ORF59a (59 aa).

Residues Y11–T33 form a C2H2-type; degenerate zinc finger.

The chain is Putative zinc finger protein ORF59a from Acidianus hospitalis (AFV-1).